We begin with the raw amino-acid sequence, 289 residues long: ATP synthase gamma chain (289 aa).

The protein belongs to the ATPase gamma chain family. F-type ATPases have 2 components, CF(1) - the catalytic core - and CF(0) - the membrane proton channel. CF(1) has five subunits: alpha(3), beta(3), gamma(1), delta(1), epsilon(1). CF(0) has three main subunits: a, b and c.

It is found in the cell inner membrane. Its function is as follows. Produces ATP from ADP in the presence of a proton gradient across the membrane. The gamma chain is believed to be important in regulating ATPase activity and the flow of protons through the CF(0) complex. This chain is ATP synthase gamma chain, found in Haemophilus influenzae (strain PittGG).